A 299-amino-acid chain; its full sequence is Oxygen-dependent coproporphyrinogen-III oxidase (299 aa).

A substrate-binding site is contributed by Ser-92. A divalent metal cation-binding residues include His-96 and His-106. The active-site Proton donor is the His-106. Residue 108 to 110 (NVR) coordinates substrate. Residues His-145 and His-175 each coordinate a divalent metal cation. Residues 240–275 (YVEFNLVWDRGTLFGLQTGGRTESILMSMPPLVRWE) form an important for dimerization region. 258–260 (GGR) is a substrate binding site.

It belongs to the aerobic coproporphyrinogen-III oxidase family. Homodimer. The cofactor is a divalent metal cation.

Its subcellular location is the cytoplasm. It catalyses the reaction coproporphyrinogen III + O2 + 2 H(+) = protoporphyrinogen IX + 2 CO2 + 2 H2O. The protein operates within porphyrin-containing compound metabolism; protoporphyrin-IX biosynthesis; protoporphyrinogen-IX from coproporphyrinogen-III (O2 route): step 1/1. Involved in the heme biosynthesis. Catalyzes the aerobic oxidative decarboxylation of propionate groups of rings A and B of coproporphyrinogen-III to yield the vinyl groups in protoporphyrinogen-IX. In Klebsiella pneumoniae subsp. pneumoniae (strain ATCC 700721 / MGH 78578), this protein is Oxygen-dependent coproporphyrinogen-III oxidase.